The sequence spans 765 residues: Zinc transporter ZIP6 (765 aa).

An N-terminal signal peptide occupies residues 1-20; the sequence is MATDLSVIMILTFALWVTSP. The Extracellular segment spans residues 21-335; it reads LHELQSTAAF…PKTYSLQIAW (315 aa). Residue Asn-68 is glycosylated (N-linked (GlcNAc...) asparagine). 2 stretches are compositionally biased toward basic and acidic residues: residues 96-135 and 174-186; these read DHEH…DHEH and RPAE…RNIK. Disordered stretches follow at residues 96–196 and 209–257; these read DHEH…EVTS and VETI…SEPR. Residues 187 to 196 are compositionally biased toward low complexity; that stretch reads ESASSSEVTS. A compositionally biased stretch (polar residues) spans 224–233; sequence VNPSTPPSIT. Positions 238-247 are enriched in basic residues; sequence VGRLSRLARK. A compositionally biased stretch (basic and acidic residues) spans 248–257; it reads KSNESVSEPR. 3 N-linked (GlcNAc...) asparagine glycosylation sites follow: Asn-250, Asn-275, and Asn-292. Residues 336–356 form a helical membrane-spanning segment; sequence LGGFIAISIISFLSLLGVILV. The Cytoplasmic segment spans residues 357–365; sequence PLMNRVFFK. A helical membrane pass occupies residues 366-386; the sequence is FLLSFLVALAVGTLSGDALLH. Residues 387 to 433 lie on the Extracellular side of the membrane; that stretch reads LLPHSHASHQHSHSHEEPAMEMKRGPLFSHLSAQNIEESSYFDSTWK. A helical membrane pass occupies residues 434–454; it reads GLTALGGLYFMFLVEHVLTLI. Over 455–667 the chain is Cytoplasmic; it reads KQFKDKKKKN…LKAGMTVKQA (213 aa). The segment at 458-519 is disordered; that stretch reads KDKKKKNQKK…EPSPFDSQQP (62 aa). Residues 475–495 adopt a coiled-coil conformation; that stretch reads ESKKQLSKYDSQLSSNEEKVD. Phosphoserine is present on residues Ser-481 and Ser-488. The span at 490 to 508 shows a compositional bias: basic and acidic residues; it reads NEEKVDPGERPESYLRADS. The span at 509 to 519 shows a compositional bias: polar residues; the sequence is QEPSPFDSQQP. The helical transmembrane segment at 668–688 threads the bilayer; that stretch reads VLYNALSAMLAYLGMATGIFI. At 689 to 696 the chain is on the extracellular side; it reads GHYAENVS. A glycan (N-linked (GlcNAc...) asparagine) is linked at Asn-694. The chain crosses the membrane as a helical span at residues 697 to 717; that stretch reads MWIFALTAGLFMYVALVDMVP. Residues 718 to 734 are Cytoplasmic-facing; sequence EMLHNDASDHGCSRWGY. A helical membrane pass occupies residues 735–755; that stretch reads FFLQNAGILLGFGIMLLISIF. Topologically, residues 756 to 765 are extracellular; that stretch reads EHKIVFRINF.

It belongs to the ZIP transporter (TC 2.A.5) family. As to quaternary structure, interacts with SLC39A10; which triggers cells to undergo EMT and mitosis. Found in a complex with SLC39A6, SLC39A10 and with the 'Ser-727' phosphorylated form of STAT3 throughout mitosis. Found in a complex with SLC39A6, SLC39A10 and with NCAM1; this complex controls NCAM1 phosphorylation and integration into focal adhesion complexes during epithelial-to-mesenchymal transition (EMT). Found in a complex with SLC39A6, SLC39A10 and with GSK3B that controls NCAM1 phosphorylation. In terms of processing, cleaved on the N-terminus before locating to the plasma membrane. N-glycosylated. Post-translationally, phosphorylated by ZAP70 in response to TCR stimulation leading to its activation. As to expression, highly expressed in the brain and testis. In the brain strongly expressed in the CA1 and CA3 regions, Purkinje cells in cerebellum and dentate gyrus in hippocampus. In testis found in spermatids or mature sperms in the central areas of seminiferous tubules.

The protein localises to the cell membrane. The protein resides in the cell projection. It localises to the lamellipodium membrane. Its subcellular location is the membrane raft. It is found in the apical cell membrane. The catalysed reaction is Zn(2+)(in) = Zn(2+)(out). Zinc-influx transporter which plays a role in zinc homeostasis and in the induction of epithelial-to-mesenchymal transition (EMT). When associated with SLC39A10, the heterodimer formed by SLC39A10 and SLC39A6 mediates cellular zinc uptake to trigger cells to undergo epithelial- to-mesenchymal transition (EMT). The SLC39A10-SLC39A6 heterodimer also controls NCAM1 phosphorylation and its integration into focal adhesion complexes during EMT. Zinc influx inactivates GSK3B, enabling unphosphorylated SNAI1 in the nucleus to down-regulate adherence genes such as E-cadherin, causing loss of cell adherence. In addition, the SLC39A10-SLC39A6 heterodimer plays an essentiel role in initiating mitosis by importing zinc into cells to initiate a pathway resulting in the onset of mitosis. Participates in the T-cell receptor signaling regulation by mediating cellular zinc uptake into activated lymphocytes. Regulates the zinc influx necessary for proper meiotic progression to metaphase II (MII) that allows the oocyte-to-egg transition. This Mus musculus (Mouse) protein is Zinc transporter ZIP6.